The following is a 136-amino-acid chain: Large ribosomal subunit protein uL16 (136 aa).

Belongs to the universal ribosomal protein uL16 family. As to quaternary structure, part of the 50S ribosomal subunit.

In terms of biological role, binds 23S rRNA and is also seen to make contacts with the A and possibly P site tRNAs. In Bradyrhizobium diazoefficiens (strain JCM 10833 / BCRC 13528 / IAM 13628 / NBRC 14792 / USDA 110), this protein is Large ribosomal subunit protein uL16.